Reading from the N-terminus, the 92-residue chain is Large ribosomal subunit protein eL42 (92 aa).

Zn(2+) contacts are provided by Cys-11, Cys-14, Cys-70, and Cys-73. The segment at 11–73 (CPNCRKHTVH…LDLRLKCKEC (63 aa)) adopts a C4-type zinc-finger fold.

The protein belongs to the eukaryotic ribosomal protein eL42 family. Part of the 50S ribosomal subunit. The cofactor is Zn(2+).

In terms of biological role, binds to the 23S rRNA. The polypeptide is Large ribosomal subunit protein eL42 (Methanothermobacter thermautotrophicus (strain ATCC 29096 / DSM 1053 / JCM 10044 / NBRC 100330 / Delta H) (Methanobacterium thermoautotrophicum)).